The primary structure comprises 216 residues: uncharacterized protein (216 aa).

The chain crosses the membrane as a helical span at residues 39–59; sequence VLPLTFIGSLLILILTIVYYF. Positions 59-108 form a coiled coil; that stretch reads FTLSGSVNELKNEISKEKSKKERLLSEIKRLEELKKTLETKKAIYEVVKI.

It localises to the membrane. This is an uncharacterized protein from Aquifex aeolicus (strain VF5).